The chain runs to 450 residues: Glucose-6-phosphate isomerase (450 aa).

Glu-290 serves as the catalytic Proton donor. Catalysis depends on residues His-311 and Lys-425.

This sequence belongs to the GPI family.

The protein resides in the cytoplasm. The catalysed reaction is alpha-D-glucose 6-phosphate = beta-D-fructose 6-phosphate. The protein operates within carbohydrate biosynthesis; gluconeogenesis. Its pathway is carbohydrate degradation; glycolysis; D-glyceraldehyde 3-phosphate and glycerone phosphate from D-glucose: step 2/4. Functionally, catalyzes the reversible isomerization of glucose-6-phosphate to fructose-6-phosphate. The chain is Glucose-6-phosphate isomerase from Limosilactobacillus fermentum (Lactobacillus fermentum).